A 657-amino-acid chain; its full sequence is Translation factor GUF1, mitochondrial (657 aa).

The transit peptide at 1–39 (MRGCLQSVKWLTSALRPSQSLASSTRYPRRLLSTSAPRN) directs the protein to the mitochondrion. Residues 59 to 239 (ERFRNFCIVA…TVIEQIPAPV (181 aa)) enclose the tr-type G domain. GTP-binding positions include 68–75 (AHVDHGKS), 132–136 (DTPGH), and 186–189 (NKVD).

This sequence belongs to the TRAFAC class translation factor GTPase superfamily. Classic translation factor GTPase family. LepA subfamily.

It localises to the mitochondrion inner membrane. It catalyses the reaction GTP + H2O = GDP + phosphate + H(+). Its function is as follows. Promotes mitochondrial protein synthesis. May act as a fidelity factor of the translation reaction, by catalyzing a one-codon backward translocation of tRNAs on improperly translocated ribosomes. Binds to mitochondrial ribosomes in a GTP-dependent manner. The protein is Translation factor GUF1, mitochondrial of Ajellomyces capsulatus (strain G186AR / H82 / ATCC MYA-2454 / RMSCC 2432) (Darling's disease fungus).